The primary structure comprises 240 residues: 3-deoxy-D-manno-octulosonic acid kinase (240 aa).

Residue Asp170 is part of the active site.

The protein belongs to the protein kinase superfamily. KdkA/RfaP family.

Its subcellular location is the cell inner membrane. The enzyme catalyses an alpha-Kdo-(2-&gt;6)-lipid IVA + ATP = a 4-O-phospho-alpha-Kdo-(2-&gt;6)-lipid IVA + ADP + H(+). Its pathway is bacterial outer membrane biogenesis; LPS core biosynthesis. Catalyzes the ATP-dependent phosphorylation of the 3-deoxy-D-manno-octulosonic acid (Kdo) residue in Kdo-lipid IV(A) at the 4-OH position. In Mannheimia succiniciproducens (strain KCTC 0769BP / MBEL55E), this protein is 3-deoxy-D-manno-octulosonic acid kinase.